The primary structure comprises 141 residues: Large ribosomal subunit protein uL16 (141 aa).

The protein belongs to the universal ribosomal protein uL16 family. Part of the 50S ribosomal subunit.

Functionally, binds 23S rRNA and is also seen to make contacts with the A and possibly P site tRNAs. The polypeptide is Large ribosomal subunit protein uL16 (Rhodospirillum centenum (strain ATCC 51521 / SW)).